The chain runs to 292 residues: UDP-3-O-acyl-N-acetylglucosamine deacetylase (292 aa).

Positions 76, 232, and 236 each coordinate Zn(2+). Histidine 259 functions as the Proton donor in the catalytic mechanism.

The protein belongs to the LpxC family. It depends on Zn(2+) as a cofactor.

It carries out the reaction a UDP-3-O-[(3R)-3-hydroxyacyl]-N-acetyl-alpha-D-glucosamine + H2O = a UDP-3-O-[(3R)-3-hydroxyacyl]-alpha-D-glucosamine + acetate. It functions in the pathway glycolipid biosynthesis; lipid IV(A) biosynthesis; lipid IV(A) from (3R)-3-hydroxytetradecanoyl-[acyl-carrier-protein] and UDP-N-acetyl-alpha-D-glucosamine: step 2/6. Functionally, catalyzes the hydrolysis of UDP-3-O-myristoyl-N-acetylglucosamine to form UDP-3-O-myristoylglucosamine and acetate, the committed step in lipid A biosynthesis. This Thermodesulfovibrio yellowstonii (strain ATCC 51303 / DSM 11347 / YP87) protein is UDP-3-O-acyl-N-acetylglucosamine deacetylase.